We begin with the raw amino-acid sequence, 575 residues long: Isocitrate dehydrogenase kinase/phosphatase (575 aa).

ATP contacts are provided by residues 316-322 (ARGDKGL) and Lys337. The active site involves Asp372.

This sequence belongs to the AceK family.

The protein resides in the cytoplasm. It carries out the reaction L-seryl-[isocitrate dehydrogenase] + ATP = O-phospho-L-seryl-[isocitrate dehydrogenase] + ADP + H(+). Its function is as follows. Bifunctional enzyme which can phosphorylate or dephosphorylate isocitrate dehydrogenase (IDH) on a specific serine residue. This is a regulatory mechanism which enables bacteria to bypass the Krebs cycle via the glyoxylate shunt in response to the source of carbon. When bacteria are grown on glucose, IDH is fully active and unphosphorylated, but when grown on acetate or ethanol, the activity of IDH declines drastically concomitant with its phosphorylation. The protein is Isocitrate dehydrogenase kinase/phosphatase of Anaeromyxobacter sp. (strain Fw109-5).